The following is a 134-amino-acid chain: MRHGHGLRKLNRTSSHRLAMLQNMMNSLIEHEAIKTTVPKAKELRRVIEPMITLAKEDTVANRRLAFDRLRDRDSVTKLFNVLGPLFKARPGGYTRILKMGYRVGDNAPMAFVEFVERPEVAEVSENSSADAAK.

Belongs to the bacterial ribosomal protein bL17 family. Part of the 50S ribosomal subunit. Contacts protein L32.

This Paracidovorax citrulli (strain AAC00-1) (Acidovorax citrulli) protein is Large ribosomal subunit protein bL17.